A 673-amino-acid chain; its full sequence is DNA ligase (673 aa).

NAD(+)-binding positions include 34–38, 83–84, and glutamate 116; these read DAEYD and SL. The N6-AMP-lysine intermediate role is filled by lysine 118. NAD(+) contacts are provided by arginine 139, glutamate 176, lysine 293, and lysine 317. 4 residues coordinate Zn(2+): cysteine 411, cysteine 414, cysteine 429, and cysteine 435. A BRCT domain is found at 595-673; the sequence is NQQNPFFGKT…EDEFLKWVNS (79 aa).

This sequence belongs to the NAD-dependent DNA ligase family. LigA subfamily. The cofactor is Mg(2+). It depends on Mn(2+) as a cofactor.

The catalysed reaction is NAD(+) + (deoxyribonucleotide)n-3'-hydroxyl + 5'-phospho-(deoxyribonucleotide)m = (deoxyribonucleotide)n+m + AMP + beta-nicotinamide D-nucleotide.. In terms of biological role, DNA ligase that catalyzes the formation of phosphodiester linkages between 5'-phosphoryl and 3'-hydroxyl groups in double-stranded DNA using NAD as a coenzyme and as the energy source for the reaction. It is essential for DNA replication and repair of damaged DNA. The chain is DNA ligase from Legionella pneumophila subsp. pneumophila (strain Philadelphia 1 / ATCC 33152 / DSM 7513).